Here is a 216-residue protein sequence, read N- to C-terminus: Ribose-5-phosphate isomerase A (216 aa).

Substrate-binding positions include 26–29 (TGST), 79–82 (DGAD), and 92–95 (KGGG). Glutamate 101 serves as the catalytic Proton acceptor. Lysine 119 contacts substrate.

This sequence belongs to the ribose 5-phosphate isomerase family. In terms of assembly, homodimer.

It catalyses the reaction aldehydo-D-ribose 5-phosphate = D-ribulose 5-phosphate. Its pathway is carbohydrate degradation; pentose phosphate pathway; D-ribose 5-phosphate from D-ribulose 5-phosphate (non-oxidative stage): step 1/1. Functionally, catalyzes the reversible conversion of ribose-5-phosphate to ribulose 5-phosphate. The sequence is that of Ribose-5-phosphate isomerase A from Legionella pneumophila (strain Paris).